The chain runs to 385 residues: Polyketide synthase 4 (385 aa).

The active site involves C157.

The protein belongs to the thiolase-like superfamily. Chalcone/stilbene synthases family. In terms of tissue distribution, expressed in glandular trichomes.

The protein resides in the cytoplasm. Its function is as follows. Polyketide synthase responsible for the biosynthesis of secondary metabolites. The polypeptide is Polyketide synthase 4 (PKSG4) (Cannabis sativa (Hemp)).